A 187-amino-acid polypeptide reads, in one-letter code: Elongation factor P (187 aa).

This sequence belongs to the elongation factor P family.

It is found in the cytoplasm. It participates in protein biosynthesis; polypeptide chain elongation. Its function is as follows. Involved in peptide bond synthesis. Stimulates efficient translation and peptide-bond synthesis on native or reconstituted 70S ribosomes in vitro. Probably functions indirectly by altering the affinity of the ribosome for aminoacyl-tRNA, thus increasing their reactivity as acceptors for peptidyl transferase. This chain is Elongation factor P, found in Corynebacterium efficiens (strain DSM 44549 / YS-314 / AJ 12310 / JCM 11189 / NBRC 100395).